A 665-amino-acid polypeptide reads, in one-letter code: PR5-like receptor kinase (665 aa).

Residues 1-24 form the signal peptide; sequence MVEGFSLSLMFLLVSHFFVSGVMS. Over 25 to 276 the chain is Extracellular; the sequence is RNFTIENKCD…TKQKSSWKLK (252 aa). N-linked (GlcNAc...) asparagine glycosylation is found at Asn26 and Asn88. 8 cysteine pairs are disulfide-bonded: Cys33/Cys249, Cys81/Cys91, Cys96/Cys103, Cys153/Cys238, Cys158/Cys221, Cys166/Cys184, Cys188/Cys197, and Cys198/Cys208. Residue Asn163 is glycosylated (N-linked (GlcNAc...) asparagine). An N-linked (GlcNAc...) asparagine glycan is attached at Asn233. Residues 277–297 traverse the membrane as a helical segment; it reads LIVGVSAALTLMILIVVVIIV. At 298 to 665 the chain is on the cytoplasmic side; sequence RTKNMRNSEW…DVLQHGSRSS (368 aa). The Protein kinase domain occupies 331 to 620; it reads NSFAHVLGKG…ALQVPPNPLL (290 aa). ATP is bound by residues 337–345 and Lys360; that span reads LGKGGFGTV. Asp455 serves as the catalytic Proton acceptor.

This sequence in the N-terminal section; belongs to the thaumatin family. In the C-terminal section; belongs to the protein kinase superfamily. Ser/Thr protein kinase family. In terms of processing, autophosphorylated in vitro. As to expression, expressed in roots. Expressed at low levels in stems.

Its subcellular location is the membrane. It carries out the reaction L-seryl-[protein] + ATP = O-phospho-L-seryl-[protein] + ADP + H(+). It catalyses the reaction L-threonyl-[protein] + ATP = O-phospho-L-threonyl-[protein] + ADP + H(+). Possesses kinase activity in vitro. This is PR5-like receptor kinase from Arabidopsis thaliana (Mouse-ear cress).